Consider the following 196-residue polypeptide: Protein LSM12 homolog B (196 aa).

One can recognise a Sm domain in the interval 3 to 70; it reads APGPGEYFSV…LAYVSEVDII (68 aa). Residues 81 to 175 enclose the AD domain; it reads ASLNFNKLVN…IVEKHFRDVE (95 aa).

This sequence belongs to the LSM12 family.

In Danio rerio (Zebrafish), this protein is Protein LSM12 homolog B (lsm12b).